A 460-amino-acid chain; its full sequence is Zinc transporter 6 (460 aa).

Over 1 to 33 the chain is Cytoplasmic; the sequence is MGTIHLFRKPQRSFFGKLLQEFRLVAADRRSWK. A helical transmembrane segment spans residues 34 to 54; sequence ILLFGAINVLCTGFLLMWCSS. Residues 55-64 are Extracellular-facing; it reads TNSIALTAYT. Residues 65–85 traverse the membrane as a helical segment; that stretch reads YLTIFDLFSLITCLISYWVMM. Topologically, residues 86-98 are cytoplasmic; the sequence is RKPSPVYSFGFER. A helical transmembrane segment spans residues 99-119; the sequence is LEVLAVFASTVLAQLGALFIL. Residues 120–134 are Extracellular-facing; sequence KESAERFLEQPEIHT. Residues 135 to 155 form a helical membrane-spanning segment; sequence GRLLVGTFVALSFNLFTMLSI. Topologically, residues 156 to 200 are cytoplasmic; that stretch reads RNKPFAYVSEAASTSWLQEHVADLSRSLCGLIPGLSSIFLPRMNP. The chain crosses the membrane as a helical span at residues 201-221; the sequence is FVLIDLAGAFALCITYMLIEI. Topologically, residues 222-223 are extracellular; it reads NN. The chain crosses the membrane as a helical span at residues 224-244; that stretch reads YFAVDTASAIAIALMTFGTMY. Residues 245–460 lie on the Cytoplasmic side of the membrane; that stretch reads PMSVYSGKVL…GINRMGQPRP (216 aa). A disordered region spans residues 371–390; that stretch reads TPVTSTPAKPSSPPPEFSFN.

The protein belongs to the cation diffusion facilitator (CDF) transporter (TC 2.A.4) family. SLC30A subfamily. As to quaternary structure, heterodimer with SLC30A5; form a functional zinc ion transmembrane transporter. In terms of tissue distribution, expressed in brain and liver, and to a lower extent also in lung. Highly expressed in brain (at protein level).

The protein resides in the golgi apparatus. It is found in the trans-Golgi network membrane. Has probably no intrinsic transporter activity but together with SLC30A5 forms a functional zinc ion:proton antiporter heterodimer, mediating zinc entry into the lumen of organelles along the secretory pathway. As part of that zinc ion:proton antiporter, contributes to zinc ion homeostasis within the early secretory pathway and regulates the activation and folding of enzymes like alkaline phosphatases and enzymes involved in phosphatidylinositol glycan anchor biosynthesis. The sequence is that of Zinc transporter 6 (Slc30a6) from Mus musculus (Mouse).